A 511-amino-acid chain; its full sequence is MFS-type transporper mpsC (511 aa).

A compositionally biased stretch (basic and acidic residues) spans 1–35 (MTSSTESKHSNDESTDLEKQDAEESHGLPEERKQD). Positions 1-65 (MTSSTESKHS…PDDPANPMNW (65 aa)) are disordered. 7 helical membrane-spanning segments follow: residues 74-94 (VVMA…FAPA), 108-128 (ITAA…PLVI), 147-167 (ITVA…FLVF), 169-189 (LITG…IADV), 201-221 (AFAM…GFIA), 228-248 (WVFR…YFVM), and 303-323 (PITL…ILLF). Residue Asn337 is glycosylated (N-linked (GlcNAc...) asparagine). 5 helical membrane-spanning segments follow: residues 342–362 (GLSY…FGML), 383–403 (LLLM…YGWT), 411–431 (ILPM…MMPI), 443–465 (VAAS…LPLA), and 476–496 (GWGN…PILF).

Belongs to the major facilitator superfamily.

The protein localises to the membrane. Its function is as follows. MFS-type transporper; part of the gene cluster that mediates the biosynthesis of macrophasetins, 3-decalinoyltetramic acids (DTAs) which feature a tetramate (pyrrolidine-2,4-dione) unit connected to a decalin fragment and that have potent bioactivities. Efflux pump that might be required for efficient secretion of macrophasetins. The protein is MFS-type transporper mpsC of Macrophomina phaseolina (strain MS6) (Charcoal rot fungus).